The following is a 183-amino-acid chain: Ribosome maturation factor RimM (183 aa).

The region spanning 96–171 is the PRC barrel domain; the sequence is PDEFYDHELE…VALIDPPEGL (76 aa).

This sequence belongs to the RimM family. Binds ribosomal protein uS19.

The protein localises to the cytoplasm. In terms of biological role, an accessory protein needed during the final step in the assembly of 30S ribosomal subunit, possibly for assembly of the head region. Essential for efficient processing of 16S rRNA. May be needed both before and after RbfA during the maturation of 16S rRNA. It has affinity for free ribosomal 30S subunits but not for 70S ribosomes. This chain is Ribosome maturation factor RimM, found in Rhodococcus jostii (strain RHA1).